A 277-amino-acid polypeptide reads, in one-letter code: Large ribosomal subunit protein uL2 (277 aa).

Disordered stretches follow at residues 32–58 (KSLT…RGGG) and 225–277 (VAMN…RRNN).

This sequence belongs to the universal ribosomal protein uL2 family. In terms of assembly, part of the 50S ribosomal subunit. Forms a bridge to the 30S subunit in the 70S ribosome.

Its function is as follows. One of the primary rRNA binding proteins. Required for association of the 30S and 50S subunits to form the 70S ribosome, for tRNA binding and peptide bond formation. It has been suggested to have peptidyltransferase activity; this is somewhat controversial. Makes several contacts with the 16S rRNA in the 70S ribosome. This Borrelia recurrentis (strain A1) protein is Large ribosomal subunit protein uL2.